A 142-amino-acid chain; its full sequence is 3-hydroxyacyl-[acyl-carrier-protein] dehydratase FabZ (142 aa).

Residue His-48 is part of the active site.

It belongs to the thioester dehydratase family. FabZ subfamily.

Its subcellular location is the cytoplasm. The catalysed reaction is a (3R)-hydroxyacyl-[ACP] = a (2E)-enoyl-[ACP] + H2O. Involved in unsaturated fatty acids biosynthesis. Catalyzes the dehydration of short chain beta-hydroxyacyl-ACPs and long chain saturated and unsaturated beta-hydroxyacyl-ACPs. The polypeptide is 3-hydroxyacyl-[acyl-carrier-protein] dehydratase FabZ (Prochlorococcus marinus (strain MIT 9313)).